The following is a 352-amino-acid chain: 4-hydroxy-3-methylbut-2-en-1-yl diphosphate synthase (flavodoxin) (352 aa).

Residues C265, C268, C300, and E307 each contribute to the [4Fe-4S] cluster site.

The protein belongs to the IspG family. It depends on [4Fe-4S] cluster as a cofactor.

The catalysed reaction is (2E)-4-hydroxy-3-methylbut-2-enyl diphosphate + oxidized [flavodoxin] + H2O + 2 H(+) = 2-C-methyl-D-erythritol 2,4-cyclic diphosphate + reduced [flavodoxin]. It functions in the pathway isoprenoid biosynthesis; isopentenyl diphosphate biosynthesis via DXP pathway; isopentenyl diphosphate from 1-deoxy-D-xylulose 5-phosphate: step 5/6. In terms of biological role, converts 2C-methyl-D-erythritol 2,4-cyclodiphosphate (ME-2,4cPP) into 1-hydroxy-2-methyl-2-(E)-butenyl 4-diphosphate. The polypeptide is 4-hydroxy-3-methylbut-2-en-1-yl diphosphate synthase (flavodoxin) (Persephonella marina (strain DSM 14350 / EX-H1)).